The chain runs to 188 residues: uncharacterized protein (188 aa).

Positions 121-142 are disordered; the sequence is ADTLSRKNKRSSDQKRNGQHFE. Residues 130–142 show a composition bias toward basic and acidic residues; it reads RSSDQKRNGQHFE.

Belongs to the chlamydial CPn_0422/CT_273/TC_0545 family.

This is an uncharacterized protein from Chlamydia trachomatis serovar D (strain ATCC VR-885 / DSM 19411 / UW-3/Cx).